A 700-amino-acid polypeptide reads, in one-letter code: Leucine zipper putative tumor suppressor 3 (700 aa).

Disordered stretches follow at residues Met1–His20, Arg40–Lys121, Leu133–Leu188, and Phe202–Pro344. Over residues Asn109–Lys121 the composition is skewed to basic and acidic residues. The segment covering His203–Thr216 has biased composition (polar residues). Low complexity-rich tracts occupy residues Asp248–Ser265 and Gly301–Ser321. A compositionally biased stretch (gly residues) spans Gly322–Gly333. A phosphoserine mark is found at Ser343 and Ser345. 2 coiled-coil regions span residues Ser345–Asp523 and Thr597–Glu666. A disordered region spans residues Arg662–Ile700. Residues His680–Ile700 are compositionally biased toward basic and acidic residues.

It belongs to the LZTS3 family. Interacts (via C-terminus) with SHANK3 (via PDZ domain). Interacts (via coiled coil) with SIPA1L1. Can form homooligomers.

The protein resides in the synapse. It is found in the postsynaptic density. It localises to the cell projection. Its subcellular location is the dendritic spine. The protein localises to the dendrite. The protein resides in the cytoplasm. It is found in the cytoskeleton. Functionally, may be involved in promoting the maturation of dendritic spines, probably via regulating SIPA1L1 levels at the postsynaptic density of synapses. The polypeptide is Leucine zipper putative tumor suppressor 3 (Mus musculus (Mouse)).